Here is a 70-residue protein sequence, read N- to C-terminus: Large ribosomal subunit protein bL31 (70 aa).

Residues C16, C18, C38, and C41 each contribute to the Zn(2+) site.

Belongs to the bacterial ribosomal protein bL31 family. Type A subfamily. In terms of assembly, part of the 50S ribosomal subunit. Zn(2+) serves as cofactor.

In terms of biological role, binds the 23S rRNA. The polypeptide is Large ribosomal subunit protein bL31 (Bifidobacterium longum (strain DJO10A)).